Consider the following 327-residue polypeptide: Aliphatic sulfonates import ATP-binding protein SsuB (327 aa).

Positions 21–54 (ELAQPRIADGDAQDAAVYERDGGAHAPPDGDRAD) are disordered. A compositionally biased stretch (basic and acidic residues) spans 37–54 (VYERDGGAHAPPDGDRAD). The region spanning 66-285 (VRLTRVSKRY…ARASAAFAAL (220 aa)) is the ABC transporter domain. 98–105 (GRSGCGKS) contacts ATP. A disordered region spans residues 300–327 (APAAPNAAGPEGASRGRAAPASGLRWAV).

This sequence belongs to the ABC transporter superfamily. Aliphatic sulfonates importer (TC 3.A.1.17.2) family. As to quaternary structure, the complex is composed of two ATP-binding proteins (SsuB), two transmembrane proteins (SsuC) and a solute-binding protein (SsuA).

It localises to the cell inner membrane. It catalyses the reaction ATP + H2O + aliphatic sulfonate-[sulfonate-binding protein]Side 1 = ADP + phosphate + aliphatic sulfonateSide 2 + [sulfonate-binding protein]Side 1.. Part of the ABC transporter complex SsuABC involved in aliphatic sulfonates import. Responsible for energy coupling to the transport system. This is Aliphatic sulfonates import ATP-binding protein SsuB from Burkholderia pseudomallei (strain K96243).